The primary structure comprises 94 residues: Putative regulatory protein Tmel_0100 (94 aa).

Belongs to the RemA family.

This chain is Putative regulatory protein Tmel_0100, found in Thermosipho melanesiensis (strain DSM 12029 / CIP 104789 / BI429).